The chain runs to 219 residues: MRMRRKPWARPELEACDFFVANPKENKGNWKNTFKNTENPIYLELGCGKGTFMAVHGSDHPNINYIAIDIKDEVLVLAKRNIEKAYEEKNKALDNVKLMPQEIALIDTILDSNDKIERIYINFCNPWPKDRHKKRRLTHPRQLTKYRDFLVDGGEIHFKTDDDELFEESLEYFKECNFEITYITRDLHNSGYEYNVVTEHEEMFSKQGIKIKFLIAKKL.

S-adenosyl-L-methionine is bound by residues Glu-44, Asp-69, Glu-102, and Asn-125. The substrate site is built by Lys-129 and Asp-161.

It belongs to the class I-like SAM-binding methyltransferase superfamily. TrmB family.

It carries out the reaction guanosine(46) in tRNA + S-adenosyl-L-methionine = N(7)-methylguanosine(46) in tRNA + S-adenosyl-L-homocysteine. The protein operates within tRNA modification; N(7)-methylguanine-tRNA biosynthesis. In terms of biological role, catalyzes the formation of N(7)-methylguanine at position 46 (m7G46) in tRNA. The protein is tRNA (guanine-N(7)-)-methyltransferase of Clostridium perfringens (strain SM101 / Type A).